A 195-amino-acid polypeptide reads, in one-letter code: Obelin (195 aa).

The propeptide occupies 1-6 (MSSKYA). EF-hand domains are found at residues 17–52 (RWIKRHKHMFDFLDINGNGKITLDEIVSKASDDICA), 53–88 (KLEATPEQTKRHQVCVEAFFRGCGMEYGKEIAFPQF), 110–145 (LIREWGDAVFDIFDKDGSGTITLDEWKAYGKISGIS), and 146–181 (PSQEDCEATFRHCDLDNSGDLDVDEMTRQHLGFWYT). Ca(2+) is bound by residues D30, N32, N34, K36, and E41. Ca(2+)-binding residues include D123, D125, S127, T129, E134, D159, D161, S163, D165, and E170.

The protein belongs to the aequorin family.

Functionally, ca(2+)-dependent bioluminescence photoprotein. Displays an emission peak at 470 nm (blue light). Trace amounts of calcium ion trigger the intramolecular oxidation of the chromophore, coelenterazine into coelenteramide and CO(2) with the concomitant emission of light. This chain is Obelin, found in Obelia longissima (Black sea hydrozoan).